The primary structure comprises 478 residues: Catalase easC (478 aa).

Residue H54 is part of the active site. Y343 provides a ligand contact to heme. The disordered stretch occupies residues 459–478 (VAEKARPDSPSRAQPGQLRL).

The protein belongs to the catalase family. The cofactor is heme.

The protein operates within alkaloid biosynthesis; ergot alkaloid biosynthesis. Catalase; part of the gene cluster that mediates the biosynthesis of fungal ergot alkaloid. DmaW catalyzes the first step of ergot alkaloid biosynthesis by condensing dimethylallyl diphosphate (DMAP) and tryptophan to form 4-dimethylallyl-L-tryptophan. The second step is catalyzed by the methyltransferase easF that methylates 4-dimethylallyl-L-tryptophan in the presence of S-adenosyl-L-methionine, resulting in the formation of 4-dimethylallyl-L-abrine. The catalase easC and the FAD-dependent oxidoreductase easE then transform 4-dimethylallyl-L-abrine to chanoclavine-I which is further oxidized by easD in the presence of NAD(+), resulting in the formation of chanoclavine-I aldehyde. Chanoclavine-I aldehyde is the precursor of ergoamides and ergopeptines in Clavicipitaceae, and clavine-type alcaloids such as fumiclavine in Trichocomaceae. However, the metabolites downstream of chanoclavine-I aldehyde in Arthrodermataceae have not been identified yet. In Arthroderma benhamiae (strain ATCC MYA-4681 / CBS 112371) (Trichophyton mentagrophytes), this protein is Catalase easC.